Here is a 158-residue protein sequence, read N- to C-terminus: Large ribosomal subunit protein bL19 (158 aa).

The disordered stretch occupies residues 1–35; it reads MTADSKDTSMSEDNTETATAIENSSAMVTDVTSKS. Positions 16 to 35 are enriched in polar residues; it reads ETATAIENSSAMVTDVTSKS.

The protein belongs to the bacterial ribosomal protein bL19 family.

In terms of biological role, this protein is located at the 30S-50S ribosomal subunit interface and may play a role in the structure and function of the aminoacyl-tRNA binding site. The polypeptide is Large ribosomal subunit protein bL19 (Prochlorococcus marinus (strain MIT 9313)).